The chain runs to 1034 residues: Isoleucine--tRNA ligase (1034 aa).

Residues 48-58 carry the 'HIGH' region motif; that stretch reads PTANGKPHIGH. Residues 588–592 carry the 'KMSKS' region motif; the sequence is KMSKH. Position 591 (Lys591) interacts with ATP.

Belongs to the class-I aminoacyl-tRNA synthetase family. IleS type 2 subfamily. In terms of assembly, monomer. Zn(2+) is required as a cofactor.

The protein localises to the cytoplasm. The enzyme catalyses tRNA(Ile) + L-isoleucine + ATP = L-isoleucyl-tRNA(Ile) + AMP + diphosphate. Its function is as follows. Catalyzes the attachment of isoleucine to tRNA(Ile). As IleRS can inadvertently accommodate and process structurally similar amino acids such as valine, to avoid such errors it has two additional distinct tRNA(Ile)-dependent editing activities. One activity is designated as 'pretransfer' editing and involves the hydrolysis of activated Val-AMP. The other activity is designated 'posttransfer' editing and involves deacylation of mischarged Val-tRNA(Ile). The sequence is that of Isoleucine--tRNA ligase from Clostridium kluyveri (strain ATCC 8527 / DSM 555 / NBRC 12016 / NCIMB 10680 / K1).